Reading from the N-terminus, the 437-residue chain is UDP-N-acetylmuramate--L-alanine ligase (437 aa).

108 to 114 (GAHGKTS) contacts ATP.

Belongs to the MurCDEF family.

The protein resides in the cytoplasm. It catalyses the reaction UDP-N-acetyl-alpha-D-muramate + L-alanine + ATP = UDP-N-acetyl-alpha-D-muramoyl-L-alanine + ADP + phosphate + H(+). It participates in cell wall biogenesis; peptidoglycan biosynthesis. Cell wall formation. This chain is UDP-N-acetylmuramate--L-alanine ligase, found in Staphylococcus aureus (strain MRSA252).